A 578-amino-acid chain; its full sequence is Acyl-CoA synthetase ACTT5 (578 aa).

Position 211–222 (Arg211–Lys222) interacts with AMP. An AMP-binding region spans residues Glu472–Lys551.

It belongs to the ATP-dependent AMP-binding enzyme family.

The protein operates within mycotoxin biosynthesis. Acyl-CoA synthetase; part of the gene clusters that mediate the biosynthesis of the host-selective toxins (HSTs) ACT-toxins responsible for brown spot of tangerine disease by the tangerine pathotype which affects tangerines and mandarins. ACT-toxins consist of three moieties, 9,10-epoxy-8-hydroxy-9-methyl-decatrienoic acid (EDA), valine and a polyketide. ACT-toxin I is toxic to both citrus and pear; toxin II the 5''-deoxy derivative of ACT-toxin I, is highly toxic to pear and slightly toxic to citrus. On cellular level, ACT-toxins affect plasma membrane of susceptible cells and cause a sudden increase in loss of K(+) after a few minutes of toxin treatment. The acyl-CoA ligase ACTT1, the hydrolase ACTT2, the enoyl-CoA hydratases ACTT3 and ACTT6, and the acyl-CoA synthetase ACTT5 are all involved in the biosynthesis of the AK-, AF- and ACT-toxin common 9,10-epoxy-8-hydroxy-9-methyl-decatrienoic acid (EDA) structural moiety. The exact role of each enzyme, and of additional enzymes identified within the AF-toxin clusters have still to be determined. On the other hand, ACTTS1 to ACTTS4 are specific to the tangerine pathotype. The function of ACTTS3 is to elongate the polyketide chain portion of ACT-toxin that is unique to this toxin. The enoyl-reductase ACTTS2 might complement the missing enoyl-reductase (ER) domain in ACTTS3 in the synthesis of the polyketide portion of ACT-toxin. The roles of the nonribosomal peptide synthetases-related proteins ACTTS1 and ACTTS4 have also still not been elucidated. The protein is Acyl-CoA synthetase ACTT5 of Alternaria alternata (Alternaria rot fungus).